The primary structure comprises 229 residues: Potassium/proton antiporter CemA (229 aa).

The next 3 helical transmembrane spans lie at 6-26, 107-127, and 189-209; these read AFIP…ISLC, ILHF…SFWG, and ILSG…KYWI.

It belongs to the CemA family.

It is found in the plastid. Its subcellular location is the chloroplast inner membrane. It catalyses the reaction K(+)(in) + H(+)(out) = K(+)(out) + H(+)(in). In terms of biological role, contributes to K(+)/H(+) antiport activity by supporting proton efflux to control proton extrusion and homeostasis in chloroplasts in a light-dependent manner to modulate photosynthesis. Prevents excessive induction of non-photochemical quenching (NPQ) under continuous-light conditions. Indirectly promotes efficient inorganic carbon uptake into chloroplasts. This is Potassium/proton antiporter CemA from Nasturtium officinale (Watercress).